A 447-amino-acid chain; its full sequence is Alkylglycerol monooxygenase (447 aa).

Transmembrane regions (helical) follow at residues 43-63 (ATPF…ILKG) and 111-131 (WDSP…YYWF). The 132-residue stretch at 118 to 249 (YLTFLGVDFG…LIIWDRIFGT (132 aa)) folds into the Fatty acid hydroxylase domain. Positions 132-136 (HRMAH) match the Histidine box-1 motif. Residues 145-149 (HQAHH) carry the Histidine box-2 motif. Residues 170–190 (SWVFYCPLALFVPPSVFAVHI) traverse the membrane as a helical segment. The Histidine box-3 motif lies at 221-225 (HRVHH). The next 3 membrane-spanning stretches (helical) occupy residues 334-354 (FLKI…EETF), 363-383 (VTIL…GFLL), and 413-433 (IESL…FWGV).

The protein belongs to the sterol desaturase family. TMEM195 subfamily. Fe cation is required as a cofactor.

It is found in the endoplasmic reticulum membrane. The enzyme catalyses 1-O-(1,2-saturated-alkyl)-sn-glycerol + (6R)-L-erythro-5,6,7,8-tetrahydrobiopterin + O2 = a 1-(1-hydroxyalkyl)-sn-glycerol + (6R)-L-erythro-6,7-dihydrobiopterin + H2O. Functionally, glyceryl-ether monooxygenase that cleaves the O-alkyl bond of ether lipids. Ether lipids are essential components of brain membranes. This Rattus norvegicus (Rat) protein is Alkylglycerol monooxygenase (Agmo).